Reading from the N-terminus, the 283-residue chain is NFU1 iron-sulfur cluster scaffold homolog, mitochondrial (283 aa).

The transit peptide at 1–30 (MSKFLSQAALNTLRNTRLGSRQLVRSFAGI) directs the protein to the mitochondrion. A nifU region spans residues 182–250 (IKELLDTRIR…IPEVESVEQV (69 aa)). The [4Fe-4S] cluster site is built by Cys219 and Cys222.

The protein belongs to the NifU family.

The protein localises to the mitochondrion. Molecular scaffold for [Fe-S] cluster assembly of mitochondrial iron-sulfur proteins. The sequence is that of NFU1 iron-sulfur cluster scaffold homolog, mitochondrial from Drosophila erecta (Fruit fly).